Consider the following 288-residue polypeptide: ATP synthase gamma chain (288 aa).

This sequence belongs to the ATPase gamma chain family. In terms of assembly, F-type ATPases have 2 components, CF(1) - the catalytic core - and CF(0) - the membrane proton channel. CF(1) has five subunits: alpha(3), beta(3), gamma(1), delta(1), epsilon(1). CF(0) has three main subunits: a, b and c.

The protein localises to the cell inner membrane. Functionally, produces ATP from ADP in the presence of a proton gradient across the membrane. The gamma chain is believed to be important in regulating ATPase activity and the flow of protons through the CF(0) complex. The protein is ATP synthase gamma chain of Acidovorax ebreus (strain TPSY) (Diaphorobacter sp. (strain TPSY)).